A 388-amino-acid polypeptide reads, in one-letter code: Branched-chain-amino-acid aminotransferase 2, chloroplastic (388 aa).

A chloroplast-targeting transit peptide spans 1–22; the sequence is MIKTITSLRKTLVLPLHLHIRT. Position 235 is an N6-(pyridoxal phosphate)lysine (K235).

The protein belongs to the class-IV pyridoxal-phosphate-dependent aminotransferase family. It depends on pyridoxal 5'-phosphate as a cofactor.

The protein resides in the plastid. Its subcellular location is the chloroplast. The catalysed reaction is L-leucine + 2-oxoglutarate = 4-methyl-2-oxopentanoate + L-glutamate. It catalyses the reaction L-isoleucine + 2-oxoglutarate = (S)-3-methyl-2-oxopentanoate + L-glutamate. The enzyme catalyses L-valine + 2-oxoglutarate = 3-methyl-2-oxobutanoate + L-glutamate. It functions in the pathway amino-acid biosynthesis; L-isoleucine biosynthesis; L-isoleucine from 2-oxobutanoate: step 4/4. Its pathway is amino-acid biosynthesis; L-leucine biosynthesis; L-leucine from 3-methyl-2-oxobutanoate: step 4/4. The protein operates within amino-acid biosynthesis; L-valine biosynthesis; L-valine from pyruvate: step 4/4. Its function is as follows. Converts 2-oxo acids to branched-chain amino acids. Shows activity with L-Leu, L-Ile and L-Val as amino donors and 2-oxoglutarate as an amino acceptor, but no activity for D-isomers of Leu, Ile, Val, Asp, Glu or Ala. This is Branched-chain-amino-acid aminotransferase 2, chloroplastic (BCAT2) from Arabidopsis thaliana (Mouse-ear cress).